Consider the following 119-residue polypeptide: Large ribosomal subunit protein uL22 (119 aa).

This sequence belongs to the universal ribosomal protein uL22 family. As to quaternary structure, part of the 50S ribosomal subunit.

Functionally, this protein binds specifically to 23S rRNA; its binding is stimulated by other ribosomal proteins, e.g. L4, L17, and L20. It is important during the early stages of 50S assembly. It makes multiple contacts with different domains of the 23S rRNA in the assembled 50S subunit and ribosome. Its function is as follows. The globular domain of the protein is located near the polypeptide exit tunnel on the outside of the subunit, while an extended beta-hairpin is found that lines the wall of the exit tunnel in the center of the 70S ribosome. In Pelodictyon phaeoclathratiforme (strain DSM 5477 / BU-1), this protein is Large ribosomal subunit protein uL22.